The chain runs to 871 residues: Alanine--tRNA ligase (871 aa).

The Zn(2+) site is built by H561, H565, C665, and H669.

This sequence belongs to the class-II aminoacyl-tRNA synthetase family. It depends on Zn(2+) as a cofactor.

The protein localises to the cytoplasm. The catalysed reaction is tRNA(Ala) + L-alanine + ATP = L-alanyl-tRNA(Ala) + AMP + diphosphate. Catalyzes the attachment of alanine to tRNA(Ala) in a two-step reaction: alanine is first activated by ATP to form Ala-AMP and then transferred to the acceptor end of tRNA(Ala). Also edits incorrectly charged Ser-tRNA(Ala) and Gly-tRNA(Ala) via its editing domain. The sequence is that of Alanine--tRNA ligase from Dehalococcoides mccartyi (strain ATCC BAA-2266 / KCTC 15142 / 195) (Dehalococcoides ethenogenes (strain 195)).